The sequence spans 231 residues: MKKTLLASSLAVGLGIVAGNAGHEAHASEADLNKASLAQMAQSNDQTLNQKPIEAGAYNYTFDYEGFTYHFESDGTHFAWNYHATGTNGADMSAQAPTTNNVAPSAVQANQVQSQEVEAPQNAQTQQPQASTSNNSQVTATPTESKSSEGSSVNVNAHLKQIAQRESGGNIHAVNPTSGAAGKYQFLQSTWDSVAPAKYKGVSPANAPESVQDAAAVKLYNTGGAGHWVTA.

Positions 1–27 (MKKTLLASSLAVGLGIVAGNAGHEAHA) are cleaved as a signal peptide. Polar residues predominate over residues 103 to 116 (APSAVQANQVQSQE). The tract at residues 103 to 153 (APSAVQANQVQSQEVEAPQNAQTQQPQASTSNNSQVTATPTESKSSEGSSV) is disordered. Over residues 119 to 137 (APQNAQTQQPQASTSNNSQ) the composition is skewed to low complexity. The segment covering 138-153 (VTATPTESKSSEGSSV) has biased composition (polar residues).

Belongs to the transglycosylase family. SceD subfamily.

It is found in the secreted. Functionally, is able to cleave peptidoglycan and affects clumping and separation of bacterial cells. This Staphylococcus aureus (strain COL) protein is Probable transglycosylase SceD (sceD).